Here is a 144-residue protein sequence, read N- to C-terminus: Austinoid biosynthesis cluster protein S (144 aa).

Belongs to the trt14 isomerase family. Homodimer.

It functions in the pathway secondary metabolite biosynthesis; terpenoid biosynthesis. Functionally, part of the gene cluster that mediates the biosynthesis of calidodehydroaustin, a fungal meroterpenoid. The first step of the pathway is the synthesis of 3,5-dimethylorsellinic acid by the polyketide synthase ausA. 3,5-dimethylorsellinic acid is then prenylated by the polyprenyl transferase ausN. Further epoxidation by the FAD-dependent monooxygenase ausM and cyclization by the probable terpene cyclase ausL lead to the formation of protoaustinoid A. Protoaustinoid A is then oxidized to spiro-lactone preaustinoid A3 by the combined action of the FAD-binding monooxygenases ausB and ausC, and the dioxygenase ausE. Acid-catalyzed keto-rearrangement and ring contraction of the tetraketide portion of preaustinoid A3 by ausJ lead to the formation of preaustinoid A4. The aldo-keto reductase ausK, with the help of ausH, is involved in the next step by transforming preaustinoid A4 into isoaustinone which is in turn hydroxylated by the P450 monooxygenase ausI to form austinolide. The cytochrome P450 monooxygenase ausG modifies austinolide to austinol. Austinol is further acetylated to austin by the O-acetyltransferase ausP, which spontaneously changes to dehydroaustin. The cytochrome P450 monooxygenase ausR then converts dehydroaustin is into 7-dehydrodehydroaustin. The hydroxylation catalyzed by ausR permits the O-acetyltransferase ausQ to add an additional acetyl group to the molecule, leading to the formation of acetoxydehydroaustin. The short chain dehydrogenase ausT catalyzes the reduction of the double bond present between carbon atoms 1 and 2 to convert 7-dehydrodehydroaustin into 1,2-dihydro-7-hydroxydehydroaustin. AusQ catalyzes not only an acetylation reaction but also the addition of the PKS ausV diketide product to 1,2-dihydro-7-hydroxydehydroaustin, forming precalidodehydroaustin. Finally, the iron/alpha-ketoglutarate-dependent dioxygenase converts precalidodehydroaustin into calidodehydroaustin. AusS is necessary for austinoids production and may play a possible function as a regulator. Its function is as follows. May play a possible function as a regulator. This chain is Austinoid biosynthesis cluster protein S, found in Aspergillus calidoustus.